The chain runs to 527 residues: MQYNGKSQQSINKINCIIEKNQSNSIINKFQVASPYDDYDDRLNFLETIEKNSGFYNVLCELFLPNGYPDSVTTDYFGYQFWDSIQALCSTITGTLATRAILKGYGVGDSSATVASATTQWLIRDGMGMIGRIVFAWRKGTDLDCNSKKWRYTADILNNIGMAFEMISPLFSSQLFLPLSCIGLIAKSICGVAGGCTKASLTQHFAKRDNLADVSAKDGSQETAVNLVGMLLSVIVSSFINDNTSLIVTWLVFLFFTSLHLFCNYRAVSAVQLKSINRYRAYLIYDYFIHNQGSIPSPSEISKLENILFSIKELDIRVGVSLCNIYKVQQKQQKLNNQFLQQKLNNITKTKNVNNNNNNNNNNNNNNNNNNNNKNNNINNINNNINNNINNNINNNINNKNNNNNNNNNNNNNNNNNNNNNNNNNKNSLEIIKKIKKSKSFIIWKKHSQRGNKILEKDFTLLIALLNGSTTRDMIESYFYAVEYFHLSSVQIPPTINISGTFFKRLEEKGWDLDRALLNSEGWTFGI.

The N-linked (GlcNAc...) asparagine glycan is linked to Asn-21. A helical membrane pass occupies residues 220–240 (SQETAVNLVGMLLSVIVSSFI). Residue Asn-243 is glycosylated (N-linked (GlcNAc...) asparagine). The helical transmembrane segment at 245–265 (SLIVTWLVFLFFTSLHLFCNY) threads the bilayer. Asn-346 is a glycosylation site (N-linked (GlcNAc...) asparagine). Residues 350-426 (TKNVNNNNNN…NNNNNNNNNK (77 aa)) form a disordered region. N-linked (GlcNAc...) asparagine glycans are attached at residues Asn-467 and Asn-497.

It belongs to the RUS1 family.

It localises to the membrane. The protein is RUS family member 1 (rusf1) of Dictyostelium discoideum (Social amoeba).